The following is an 87-amino-acid chain: Exodeoxyribonuclease 7 small subunit (87 aa).

It belongs to the XseB family. As to quaternary structure, heterooligomer composed of large and small subunits.

It is found in the cytoplasm. It carries out the reaction Exonucleolytic cleavage in either 5'- to 3'- or 3'- to 5'-direction to yield nucleoside 5'-phosphates.. Its function is as follows. Bidirectionally degrades single-stranded DNA into large acid-insoluble oligonucleotides, which are then degraded further into small acid-soluble oligonucleotides. This Xanthomonas campestris pv. campestris (strain 8004) protein is Exodeoxyribonuclease 7 small subunit.